A 33-amino-acid polypeptide reads, in one-letter code: MEALVYTFLLVSTLGIIFFAIFFREPPTISTKK.

A helical transmembrane segment spans residues 3 to 23 (ALVYTFLLVSTLGIIFFAIFF).

It belongs to the PsbT family. PSII is composed of 1 copy each of membrane proteins PsbA, PsbB, PsbC, PsbD, PsbE, PsbF, PsbH, PsbI, PsbJ, PsbK, PsbL, PsbM, PsbT, PsbY, PsbZ, Psb30/Ycf12, at least 3 peripheral proteins of the oxygen-evolving complex and a large number of cofactors. It forms dimeric complexes.

It is found in the plastid. The protein localises to the chloroplast thylakoid membrane. In terms of biological role, found at the monomer-monomer interface of the photosystem II (PS II) dimer, plays a role in assembly and dimerization of PSII. PSII is a light-driven water plastoquinone oxidoreductase, using light energy to abstract electrons from H(2)O, generating a proton gradient subsequently used for ATP formation. The polypeptide is Photosystem II reaction center protein T (Helianthus annuus (Common sunflower)).